Reading from the N-terminus, the 273-residue chain is Shikimate dehydrogenase (NADP(+)) (273 aa).

Shikimate contacts are provided by residues S14–S16 and T61. Catalysis depends on K65, which acts as the Proton acceptor. Shikimate is bound by residues N86 and D102. Residues G126–A130, N150–K155, and M213 contribute to the NADP(+) site. Y215 lines the shikimate pocket. G237 is an NADP(+) binding site.

The protein belongs to the shikimate dehydrogenase family. Homodimer.

It carries out the reaction shikimate + NADP(+) = 3-dehydroshikimate + NADPH + H(+). The protein operates within metabolic intermediate biosynthesis; chorismate biosynthesis; chorismate from D-erythrose 4-phosphate and phosphoenolpyruvate: step 4/7. Involved in the biosynthesis of the chorismate, which leads to the biosynthesis of aromatic amino acids. Catalyzes the reversible NADPH linked reduction of 3-dehydroshikimate (DHSA) to yield shikimate (SA). The protein is Shikimate dehydrogenase (NADP(+)) of Aeromonas salmonicida (strain A449).